The following is a 404-amino-acid chain: Proteasomal ubiquitin receptor ADRM1-B (404 aa).

The Pru domain occupies 17 to 130 (SSSKYLVEFR…RKVNEYLNNP (114 aa)). Disordered regions lie at residues 128 to 149 (NNPPMPGALGGSGSGSHELSAL), 195 to 258 (GSGG…TSPT), and 376 to 404 (FAKAMQSTSSQKERESSEKKEEEEDMSLD). Residues 195-247 (GSGGPTTSSSSSSSRSQSAAVTPSSTTSSTRTTSAPVAPAAAPATTPSPAVSS) are compositionally biased toward low complexity. Residues 248-258 (NDGASAATSPT) show a composition bias toward polar residues. Residues 278–390 (TGEGGQQVDL…QSTSSQKERE (113 aa)) form the DEUBAD domain. A compositionally biased stretch (basic and acidic residues) spans 386–395 (QKERESSEKK).

It belongs to the ADRM1 family. As to quaternary structure, component of the 19S proteasome regulatory particle complex. The 26S proteasome consists of a 20S core particle (CP) and two 19S regulatory subunits (RP).

Its subcellular location is the cytoplasm. The protein localises to the nucleus. Component of the 26S proteasome, a multiprotein complex involved in the ATP-dependent degradation of ubiquitinated proteins. This complex plays a key role in the maintenance of protein homeostasis by removing misfolded or damaged proteins, which could impair cellular functions, and by removing proteins whose functions are no longer required. Therefore, the proteasome participates in numerous cellular processes, including cell cycle progression, apoptosis, or DNA damage repair. Within the complex, functions as a proteasomal ubiquitin receptor. The polypeptide is Proteasomal ubiquitin receptor ADRM1-B (adrm1-b) (Xenopus laevis (African clawed frog)).